Reading from the N-terminus, the 505-residue chain is MEEIQRYLQLDRSQQHDFLYPLIFQEYIYALAHHHSLNRSILLENPDYDNQLSFLIVKRLITRMYQQNHFIIFANDSNQNPFFGRNNNLYSQTISEGFSFIVEIPFYIRLIPSQAGKGILKSYNLRSIHSLFPFLENNFSHLNSVLDILIPRSVHLEILVQNLRYWVKDVSSLHLLRFLFRESWNCNPLIATKKRGFGFEPKRSQRLLFFLYNSHVCEYESIFVFLRNQSSHLRSTSFGVFLERIYFYGKIERLVEVFAKDFRASLWLFKDPFMHYVRYQGKSILVSKGTPLLMNKWKYYLVNFWQSYFDLWVHSGRVYINQLPNHSLNFIGYLSSVRLNPSMVRSQMLENSFLINNAIKKLDTLVPIVPLIGSLAKAKFCNLLGHPISKPAWAGLSDSDIIDRFGQICRNLSHYHSGSSKKKSLYRIKYILRLSCAKTLARKHKSTVRAFLKRLGSEFLEEFLTLEEEVLSLTFPRASSTFRGEYRSRIWYLDIIYINDLTNFQ.

It belongs to the intron maturase 2 family. MatK subfamily.

The protein localises to the plastid. Its subcellular location is the chloroplast. Functionally, usually encoded in the trnK tRNA gene intron. Probably assists in splicing its own and other chloroplast group II introns. This chain is Maturase K, found in Chiococca alba (West Indian milkberry).